The primary structure comprises 450 residues: UPF0236 protein in vanSb 3'region (450 aa).

This sequence belongs to the UPF0236 family.

The protein is UPF0236 protein in vanSb 3'region of Streptococcus gallolyticus (Streptococcus bovis biotype I).